A 555-amino-acid polypeptide reads, in one-letter code: Beta-caryophyllene synthase (555 aa).

Mg(2+) is bound by residues aspartate 313, aspartate 317, aspartate 456, and glutamate 464. The DDXXD motif signature appears at 313-317; it reads DDIYD.

This sequence belongs to the terpene synthase family. Requires Mg(2+) as cofactor.

It catalyses the reaction (2E,6E)-farnesyl diphosphate = (+)-(E)-beta-caryophyllene + diphosphate. Its pathway is secondary metabolite biosynthesis; terpenoid biosynthesis. Its function is as follows. Sesquiterpene synthase converting farnesyl diphosphate to beta-caryophyllene as the major product. The protein is Beta-caryophyllene synthase of Phyla dulcis (Aztec sweet herb).